Here is a 506-residue protein sequence, read N- to C-terminus: NADH-quinone oxidoreductase subunit N (506 aa).

14 consecutive transmembrane segments (helical) span residues 14 to 34 (MVPE…DLFF), 40 to 60 (YVAL…ITLY), 72 to 92 (FVLD…AALI), 109 to 129 (GEYY…ASSV), 131 to 151 (FVTL…LVGI), 166 to 186 (VING…LYGI), 209 to 229 (LLLA…IATV), 256 to 276 (MAGF…VSVQ), 286 to 306 (MSIY…VVAL), 314 to 334 (LFAY…VALS), 343 to 363 (FYML…HGLI), 385 to 405 (AIVM…AGFI), 420 to 440 (AHYV…VYYF), and 465 to 485 (IVMS…MIGY).

The protein belongs to the complex I subunit 2 family. In terms of assembly, NDH-1 is composed of 14 different subunits. Subunits NuoA, H, J, K, L, M, N constitute the membrane sector of the complex.

It localises to the cell membrane. It catalyses the reaction a quinone + NADH + 5 H(+)(in) = a quinol + NAD(+) + 4 H(+)(out). Its function is as follows. NDH-1 shuttles electrons from NADH, via FMN and iron-sulfur (Fe-S) centers, to quinones in the respiratory chain. The immediate electron acceptor for the enzyme in this species is believed to be a menaquinone. Couples the redox reaction to proton translocation (for every two electrons transferred, four hydrogen ions are translocated across the cytoplasmic membrane), and thus conserves the redox energy in a proton gradient. In Bacillus anthracis, this protein is NADH-quinone oxidoreductase subunit N.